The following is a 387-amino-acid chain: Methyltransferase phomM' (387 aa).

Positions 98-223 (PHRPKDLHIL…QSVADLFTTL (126 aa)) are methyltransferase domain.

It belongs to the class I-like SAM-binding methyltransferase superfamily. Erg6/SMT family.

It participates in mycotoxin biosynthesis. Functionally, methyltransferase; part of the gene cluster that mediates the biosynthesis of the phomopsins, a group of hexapeptide mycotoxins which infects lupins and causes lupinosis disease in livestock. Within the pathway, phomM' acts as an S-adenosylmethionine-dependent alpha-N-methyltransferase that catalyzes two successive N-methylation reactions, converting N-desmethyl-phomopsin A to phomopsin A and phomopsin A further to an N,N-dimethylated congener called phomopsin E. The pathway starts with the processing of the precursor phomA' by several endopeptidases including kexin proteases as well as the cluster-specific S41 family peptidase phomP1 and the oligopeptidase phomG' to produce 10 identical copies of the hexapeptide Tyr-Val-Ile-Pro-Ile-Asp. After being excised from the precursor peptide, the core peptides are cyclized and modified post-translationally by enzymes encoded within the gene cluster. The timing and order of proteolysis of the phomA' precursor and PTMs are still unknown. Two tyrosinase-like enzymes, phomQ1' and phomQ2, catalyze the chlorination and hydroxylation of Tyr, respectively. PhomYb, is proposed to be involved in the construction of the macrocyclic structure. The other 4 ustYa family proteins may be involved in PTMs that generate the unique structure of phomopsin A. PhomYa' is required for the hydroxylation of C-beta of Tyr. PhomYc', phomYd', and phomYe are responsible for the biosynthesis of 2,3-dehydroisoleucine (dIle), 2,3-dehydroaspartic acid (dAsp), and 3,4-dehydroproline (dPro), respectively. While dIle formation by phomYc' is indispensable for the installation of dAsp by phomYd', the order of the other PTMs have not been elucidated yet. Most of the biosynthetic enzymes likely have broad substrate specificity, and thus, there might be a metabolic grid from a precursor to phomopsin A. The enzyme(s) responsible for the biosynthesis of 3,4-dehydrovaline (dVal) have also not been identified yet. Finally, phomM' acts as an S-adenosylmethionine-dependent alpha-N-methyltransferase that catalyzes two successive N-methylation reactions, converting N-desmethyl-phomopsin A to phomopsin A and phomopsin A further to an N,N-dimethylated congener called phomopsin E. This Diaporthe leptostromiformis (Lupinosis disease fungus) protein is Methyltransferase phomM'.